The primary structure comprises 425 residues: Glutamyl-tRNA reductase (425 aa).

Residues 49–52 (TCNR), Ser109, 114–116 (EGQ), and Gln120 each bind substrate. Cys50 (nucleophile) is an active-site residue. Residue 189 to 194 (GAGETG) coordinates NADP(+).

Belongs to the glutamyl-tRNA reductase family. In terms of assembly, homodimer.

The catalysed reaction is (S)-4-amino-5-oxopentanoate + tRNA(Glu) + NADP(+) = L-glutamyl-tRNA(Glu) + NADPH + H(+). Its pathway is porphyrin-containing compound metabolism; protoporphyrin-IX biosynthesis; 5-aminolevulinate from L-glutamyl-tRNA(Glu): step 1/2. It participates in porphyrin-containing compound metabolism; chlorophyll biosynthesis. Catalyzes the NADPH-dependent reduction of glutamyl-tRNA(Glu) to glutamate 1-semialdehyde (GSA). This Chlorobium luteolum (strain DSM 273 / BCRC 81028 / 2530) (Pelodictyon luteolum) protein is Glutamyl-tRNA reductase.